The following is a 591-amino-acid chain: Aspartate--tRNA(Asp/Asn) ligase (591 aa).

Glutamate 176 is a binding site for L-aspartate. Residues 200 to 203 are aspartate; it reads QLFK. Residue arginine 222 coordinates L-aspartate. ATP is bound by residues 222–224 and glutamine 231; that span reads RDE. Residue histidine 450 coordinates L-aspartate. Glutamate 484 is an ATP binding site. Arginine 491 is a binding site for L-aspartate. 536–539 is a binding site for ATP; sequence GLDR.

It belongs to the class-II aminoacyl-tRNA synthetase family. Type 1 subfamily. Homodimer.

It is found in the cytoplasm. It catalyses the reaction tRNA(Asx) + L-aspartate + ATP = L-aspartyl-tRNA(Asx) + AMP + diphosphate. Aspartyl-tRNA synthetase with relaxed tRNA specificity since it is able to aspartylate not only its cognate tRNA(Asp) but also tRNA(Asn). Reaction proceeds in two steps: L-aspartate is first activated by ATP to form Asp-AMP and then transferred to the acceptor end of tRNA(Asp/Asn). This Bacillus mycoides (strain KBAB4) (Bacillus weihenstephanensis) protein is Aspartate--tRNA(Asp/Asn) ligase.